The primary structure comprises 601 residues: Elongation factor 4 (601 aa).

In terms of domain architecture, tr-type G spans 6–188 (NRIRNFCIIA…QVVTKIAPPK (183 aa)). GTP contacts are provided by residues 18–23 (DHGKST) and 135–138 (NKID).

This sequence belongs to the TRAFAC class translation factor GTPase superfamily. Classic translation factor GTPase family. LepA subfamily.

The protein resides in the cell membrane. The enzyme catalyses GTP + H2O = GDP + phosphate + H(+). Required for accurate and efficient protein synthesis under certain stress conditions. May act as a fidelity factor of the translation reaction, by catalyzing a one-codon backward translocation of tRNAs on improperly translocated ribosomes. Back-translocation proceeds from a post-translocation (POST) complex to a pre-translocation (PRE) complex, thus giving elongation factor G a second chance to translocate the tRNAs correctly. Binds to ribosomes in a GTP-dependent manner. This Desulforamulus reducens (strain ATCC BAA-1160 / DSM 100696 / MI-1) (Desulfotomaculum reducens) protein is Elongation factor 4.